The following is a 482-amino-acid chain: Pyruvate kinase (482 aa).

Arg37 provides a ligand contact to substrate. Asn39, Ser41, and Asp71 together coordinate K(+). 39-42 (NFSH) contacts ATP. Residues Arg78 and Lys160 each contribute to the ATP site. Residue Glu222 coordinates Mg(2+). Residues Gly245, Asp246, and Thr278 each contribute to the substrate site. Asp246 is a binding site for Mg(2+).

This sequence belongs to the pyruvate kinase family. Homotetramer. Requires Mg(2+) as cofactor. K(+) serves as cofactor.

It carries out the reaction pyruvate + ATP = phosphoenolpyruvate + ADP + H(+). It functions in the pathway carbohydrate degradation; glycolysis; pyruvate from D-glyceraldehyde 3-phosphate: step 5/5. This is Pyruvate kinase (ttuE) from Agrobacterium vitis (Rhizobium vitis).